The chain runs to 43 residues: Protein PsbN (43 aa).

Residues 5 to 27 traverse the membrane as a helical segment; sequence TLVTIFISGSLVSFTGYALYTAF.

Belongs to the PsbN family.

The protein localises to the plastid. The protein resides in the chloroplast thylakoid membrane. Its function is as follows. May play a role in photosystem I and II biogenesis. This is Protein PsbN from Piper cenocladum (Ant piper).